The following is a 232-amino-acid chain: Large ribosomal subunit protein uL1 (232 aa).

This sequence belongs to the universal ribosomal protein uL1 family. Part of the 50S ribosomal subunit.

In terms of biological role, binds directly to 23S rRNA. The L1 stalk is quite mobile in the ribosome, and is involved in E site tRNA release. Its function is as follows. Protein L1 is also a translational repressor protein, it controls the translation of the L11 operon by binding to its mRNA. The protein is Large ribosomal subunit protein uL1 of Methylorubrum extorquens (strain CM4 / NCIMB 13688) (Methylobacterium extorquens).